The following is a 408-amino-acid chain: Homogentisate geranylgeranyltransferase (408 aa).

The N-terminal 62 residues, 1–62 (MQAVTAAAAA…TVMHKFSAIS (62 aa)), are a transit peptide targeting the chloroplast. 9 consecutive transmembrane segments (helical) span residues 122–142 (HTIF…MKSI), 156–176 (ALTA…LYDI), 194–214 (SVAT…SIGI), 221–241 (LMCA…EAPF), 248–268 (ALLA…LAFF), 286–306 (LVFA…FKDI), 329–349 (VYQL…LVGA), 352–372 (TNLF…LTLW), and 386–406 (VTSF…LIPF).

Belongs to the UbiA prenyltransferase family. Expressed in seeds.

It is found in the plastid. Its subcellular location is the chloroplast membrane. The catalysed reaction is homogentisate + (2E,6E,10E)-geranylgeranyl diphosphate + H(+) = 6-geranylgeranyl-2-methylbenzene-1,4-diol + CO2 + diphosphate. It participates in cofactor biosynthesis; tocopherol biosynthesis. Functionally, involved in the synthesis of tocotrienol (vitamin E). Catalyzes the condensation of homogentisate and geranylgeranyl diphosphate to form 2-methyl-6-geranylgeranylbenzoquinol. Possesses low activity with phytyl diphosphate as substrate. This Hordeum vulgare (Barley) protein is Homogentisate geranylgeranyltransferase.